Here is a 123-residue protein sequence, read N- to C-terminus: Large ribosomal subunit protein bL12 (123 aa).

It belongs to the bacterial ribosomal protein bL12 family. In terms of assembly, homodimer. Part of the ribosomal stalk of the 50S ribosomal subunit. Forms a multimeric L10(L12)X complex, where L10 forms an elongated spine to which 2 to 4 L12 dimers bind in a sequential fashion. Binds GTP-bound translation factors.

Forms part of the ribosomal stalk which helps the ribosome interact with GTP-bound translation factors. Is thus essential for accurate translation. The sequence is that of Large ribosomal subunit protein bL12 from Clostridium kluyveri (strain NBRC 12016).